The primary structure comprises 249 residues: 1-(5-phosphoribosyl)-5-[(5-phosphoribosylamino)methylideneamino] imidazole-4-carboxamide isomerase (249 aa).

Residue Asp-8 is the Proton acceptor of the active site. The Proton donor role is filled by Asp-131.

This sequence belongs to the HisA/HisF family.

The protein localises to the cytoplasm. It carries out the reaction 1-(5-phospho-beta-D-ribosyl)-5-[(5-phospho-beta-D-ribosylamino)methylideneamino]imidazole-4-carboxamide = 5-[(5-phospho-1-deoxy-D-ribulos-1-ylimino)methylamino]-1-(5-phospho-beta-D-ribosyl)imidazole-4-carboxamide. Its pathway is amino-acid biosynthesis; L-histidine biosynthesis; L-histidine from 5-phospho-alpha-D-ribose 1-diphosphate: step 4/9. The sequence is that of 1-(5-phosphoribosyl)-5-[(5-phosphoribosylamino)methylideneamino] imidazole-4-carboxamide isomerase from Nitrosomonas europaea (strain ATCC 19718 / CIP 103999 / KCTC 2705 / NBRC 14298).